A 425-amino-acid chain; its full sequence is Glucose-1-phosphate adenylyltransferase (425 aa).

Residues Tyr109, Gly175, 190 to 191 (EK), and Ser208 each bind alpha-D-glucose 1-phosphate.

The protein belongs to the bacterial/plant glucose-1-phosphate adenylyltransferase family. As to quaternary structure, homotetramer.

The enzyme catalyses alpha-D-glucose 1-phosphate + ATP + H(+) = ADP-alpha-D-glucose + diphosphate. The protein operates within glycan biosynthesis; glycogen biosynthesis. Its function is as follows. Involved in the biosynthesis of ADP-glucose, a building block required for the elongation reactions to produce glycogen. Catalyzes the reaction between ATP and alpha-D-glucose 1-phosphate (G1P) to produce pyrophosphate and ADP-Glc. In Saccharophagus degradans (strain 2-40 / ATCC 43961 / DSM 17024), this protein is Glucose-1-phosphate adenylyltransferase.